A 393-amino-acid chain; its full sequence is MASMVAFRPEAFLCFSPPKTTRSTRSPRISMASTVGPSTKVEIPKKPFMPPREVHVQVTHSMPPQKIEIFKSLEDWAENNILVHLKPVEKCWQPQDFLPDPSSEGFHEEVKELRERSKEIPDGYYVCLVGDMITEEALPTYQTMLNTLDGVRDETGASLTSWAVWTRAWTAEENRHGDLLNKYLYLSGRVDMKQIEKTIQYLIGSGMDPRTENSPYLGFIYTSFQERATFISHGNTARHAKEHGDVKLAQICGTIASDEKRHETAYTKIVEKLFEIDPDGTVLSFADMMKKKISMPAHLMYDGQDDNLFEHFSAVAQRLGVDTAKDYADILEFLINRWKVGELTGFSGEGKRAQDFVCTLAPRIRRIEERAQERAKQAPRIPCSWIYGREVQL.

The N-terminal 31 residues, 1 to 31 (MASMVAFRPEAFLCFSPPKTTRSTRSPRISM), are a transit peptide targeting the chloroplast. Fe cation contacts are provided by glutamate 135, glutamate 173, histidine 176, glutamate 226, glutamate 259, and histidine 262.

This sequence belongs to the fatty acid desaturase type 2 family. As to quaternary structure, homodimer. Fe(2+) is required as a cofactor.

It localises to the plastid. It is found in the chloroplast. It carries out the reaction octadecanoyl-[ACP] + 2 reduced [2Fe-2S]-[ferredoxin] + O2 + 2 H(+) = (9Z)-octadecenoyl-[ACP] + 2 oxidized [2Fe-2S]-[ferredoxin] + 2 H2O. Its pathway is lipid metabolism; fatty acid metabolism. Its function is as follows. Converts stearoyl-ACP to oleoyl-ACP by introduction of a cis double bond between carbons 9 and 10 of the acyl chain. In Elaeis guineensis var. tenera (Oil palm), this protein is Stearoyl-[acyl-carrier-protein] 9-desaturase, chloroplastic.